An 875-amino-acid polypeptide reads, in one-letter code: MSKSTAEIRQAFLDFFHSKGHQVVASSSLVPNNDPTLLFTNAGMNQFKDVFLGLDKRNYSRATTSQRCVRAGGKHNDLENVGYTARHHTFFEMLGNFSFGDYFKHDAIQYAWELLTGENWFNLPKERLWVTVYETDDEAYEIWEKEVGIPRERIIRIGDNKGAPYASDNFWQMGDTGPCGPCTEIFYDHGDHIWGGPPGTAEEDGDRYIEIWNIVFMQFNRQIDGTMEPLPKPSVDTGMGLERIAAVLQHVNSNYDIDLFSTLIKSVAEVTGATDLSNKSLRVIADHIRSCAFLIADGVIPSNENRGYVLRRIIRRAVRHGNMLGAKDTFFYKLVGPLVGVMGDAGEELKRQQSQVEQVLKTEEEQFARTLERGLALLDEELSQLTGDTLDGETAFRLYDTYGFPVDLTADVCRERNIKVDEAGFEAAMEEQRRRARESSGFGADYNAMIRVDSASEFQGYDRLELNAKVTALFVDGKAVDSISAGQDAVVVLDKTPFYAESGGQVGDKGELKGNGFSFAVSDTQKYGQAIGHIGKLASGSLKVGEGVQAEVDEARRERIRLNHSATHLMHAALRDVLGTHVAQKGSLVNDKILRFDFSHFEAMKPSEIRAVEDMVNAQIRRNLPIETNIMDLEAARAKGAMALFGEKYDERVRVLSMGDFSTELCGGTHASRTGDIGLFRILSESGTAAGVRRIEAVTGEGAIASLHAESDQLHDIAQLLKGDSHNLGEKVRSALERSRQLEKELQQLKEQAAVQESANLSSKAVDIKGVKLLVSELAGVEPKMLRTMVDDLKNQLGSTIIVLATAVDGKVSLIAGVSKDVTDRVKAGELIGMVAQQVGGKGGGRPDMAQAGGTDAAALPAALASVESWVSAKL.

Positions 564, 568, 666, and 670 each coordinate Zn(2+).

This sequence belongs to the class-II aminoacyl-tRNA synthetase family. Homotetramer. Requires Zn(2+) as cofactor.

The protein resides in the cytoplasm. It carries out the reaction tRNA(Ala) + L-alanine + ATP = L-alanyl-tRNA(Ala) + AMP + diphosphate. In terms of biological role, catalyzes the attachment of alanine to tRNA(Ala) in a two-step reaction: alanine is first activated by ATP to form Ala-AMP and then transferred to the acceptor end of tRNA(Ala). Also edits incorrectly charged Ser-tRNA(Ala) and Gly-tRNA(Ala) via its editing domain. In Enterobacter sp. (strain 638), this protein is Alanine--tRNA ligase.